The chain runs to 1342 residues: Putative aldehyde oxidase-like protein (1342 aa).

Residues 1–23 are disordered; sequence MSDCNSGGGERRPNARATDAPPV. The FAD-binding PCMH-type domain maps to 221-408; that stretch reads ISSPREGWYC…LSIFIPHWAS (188 aa).

It belongs to the xanthine dehydrogenase family.

The chain is Putative aldehyde oxidase-like protein from Oryza sativa subsp. japonica (Rice).